A 425-amino-acid polypeptide reads, in one-letter code: Trigger factor (425 aa).

One can recognise a PPIase FKBP-type domain in the interval 158–231 (GDLVRVNMEV…VEEVYKRTLP (74 aa)).

It belongs to the FKBP-type PPIase family. Tig subfamily.

It is found in the cytoplasm. It carries out the reaction [protein]-peptidylproline (omega=180) = [protein]-peptidylproline (omega=0). In terms of biological role, involved in protein export. Acts as a chaperone by maintaining the newly synthesized protein in an open conformation. Functions as a peptidyl-prolyl cis-trans isomerase. The polypeptide is Trigger factor (Thermotoga petrophila (strain ATCC BAA-488 / DSM 13995 / JCM 10881 / RKU-1)).